We begin with the raw amino-acid sequence, 682 residues long: 1,4-alpha-glucan-branching enzyme (682 aa).

Residues W88 and K124 each coordinate (1,4-alpha-D-glucosyl)n. The Nucleophile role is filled by D342. E397 serves as the catalytic Proton donor.

This sequence belongs to the glycosyl hydrolase 13 family. GlgB subfamily.

Its subcellular location is the cytoplasm. The catalysed reaction is Transfers a segment of a (1-&gt;4)-alpha-D-glucan chain to a primary hydroxy group in a similar glucan chain.. The protein operates within glycan biosynthesis; glycogen biosynthesis. In terms of biological role, glycogen-branching enzyme participates in the glycogen biosynthetic process along with glycogenin and glycogen synthase. Generates alpha-1,6-glucosidic branches from alpha-1,4-linked glucose chains, to increase solubility of the glycogen polymer. This is 1,4-alpha-glucan-branching enzyme from Cryptococcus neoformans var. grubii serotype A (strain H99 / ATCC 208821 / CBS 10515 / FGSC 9487) (Filobasidiella neoformans var. grubii).